The following is a 355-amino-acid chain: Glucokinase (355 aa).

Residue 11–16 participates in ATP binding; the sequence is GDIGGT.

Belongs to the bacterial glucokinase family.

The protein resides in the cytoplasm. The catalysed reaction is D-glucose + ATP = D-glucose 6-phosphate + ADP + H(+). The sequence is that of Glucokinase from Synechocystis sp. (strain ATCC 27184 / PCC 6803 / Kazusa).